The chain runs to 94 residues: Large ribosomal subunit protein bL27 (94 aa).

Residues 1 to 9 (MLKLNLQFF) constitute a propeptide that is removed on maturation.

It belongs to the bacterial ribosomal protein bL27 family. The N-terminus is cleaved by ribosomal processing cysteine protease Prp.

This Staphylococcus haemolyticus (strain JCSC1435) protein is Large ribosomal subunit protein bL27.